A 92-amino-acid polypeptide reads, in one-letter code: Neuropeptide F (92 aa).

Positions 1 to 27 are cleaved as a signal peptide; the sequence is MSQSRPLALLVVAALVAAAVLVAAAEA. Positions 28 to 51 are excised as a propeptide; that stretch reads QQADGNKLEGLADALKYLQELDRY. F60 bears the Phenylalanine amide mark. Positions 64-92 are excised as a propeptide; the sequence is AELRPDVVDDVIPEEMSADKFWRRFARRR.

The protein belongs to the NPY family. Widely expressed in the nervous system. Expressed in corpora cardiaca, hypocerebral ganglion, frontal ganglion, protocerebrum, antennal lobe, tritocerebrum and thoracic ganglia. Not detected in corpora allata, pars intercerebralis, circumesophageal connectives, subesophageal ganglion, abdominal ganglion and abdominal perisympathetic organs.

It is found in the secreted. Functionally, accelerates ovarian maturation in females. The sequence is that of Neuropeptide F from Locusta migratoria (Migratory locust).